The following is a 495-amino-acid chain: Acetyl-coenzyme A carboxylase carboxyl transferase subunit beta, chloroplastic (495 aa).

The segment at 188 to 208 (SRNSSENEGSSRRTRTKGSDL) is disordered. In terms of domain architecture, CoA carboxyltransferase N-terminal spans 226 to 495 (LWVQCENCYG…PLNQKSSKIK (270 aa)). Zn(2+) is bound by residues cysteine 230, cysteine 233, cysteine 249, and cysteine 252. The C4-type zinc-finger motif lies at 230 to 252 (CENCYGLNYKKFFKSKMNICEQC).

Belongs to the AccD/PCCB family. In terms of assembly, acetyl-CoA carboxylase is a heterohexamer composed of biotin carboxyl carrier protein, biotin carboxylase and 2 subunits each of ACCase subunit alpha and ACCase plastid-coded subunit beta (accD). The cofactor is Zn(2+).

The protein localises to the plastid. It is found in the chloroplast stroma. It carries out the reaction N(6)-carboxybiotinyl-L-lysyl-[protein] + acetyl-CoA = N(6)-biotinyl-L-lysyl-[protein] + malonyl-CoA. Its pathway is lipid metabolism; malonyl-CoA biosynthesis; malonyl-CoA from acetyl-CoA: step 1/1. Its function is as follows. Component of the acetyl coenzyme A carboxylase (ACC) complex. Biotin carboxylase (BC) catalyzes the carboxylation of biotin on its carrier protein (BCCP) and then the CO(2) group is transferred by the transcarboxylase to acetyl-CoA to form malonyl-CoA. This chain is Acetyl-coenzyme A carboxylase carboxyl transferase subunit beta, chloroplastic, found in Nicotiana tomentosiformis (Tobacco).